A 496-amino-acid chain; its full sequence is MVSIAGQIGWEAVIGIETHVQLGTASKIFTQASTNFGDDPNTNINPVVCGLPGTLPVLNQKVLEYAVKAAMALNLKVSEHSKFDRKQYFYPDLPKNYQISQYDEPIAEDGWIEVEIAEKEKQTYTKRIGIERLHMEEDAGKLVHIGSDRLTGSNHSLIDYNRAGIALAEIVSKPDLRTGREAAEYASEIRRIMRYLGVSDGNMQEGSLRCDVNISVRKGKNAPFGIKIEIKNMNSFSAIQKACEYEISRQIKAINNGERIIQETRLWDENKQLTTSMRSKEVASDYRYFPDPDLGPIEIELDRREAWKHELPELPAIKRHRYVEELGLSIYDARIITDELPMAEYFESAITAGAEAKALANWLMGDISAYLNTNKTTIGEIKLRPSQLAELIILISNGEISGKIAKEILPELIEKGLSPSALIDDKGLAMISDNNQIRTIIVELLSLYPEEVKAFRNGKIKLQGFFVGQLMKKTSGKADPKISNKILLEILNASEN.

The protein belongs to the GatB/GatE family. GatB subfamily. As to quaternary structure, subunit of the heterotrimeric GatCAB amidotransferase (AdT) complex, composed of A, B and C subunits.

It is found in the plastid. The protein localises to the organellar chromatophore. It carries out the reaction L-glutamyl-tRNA(Gln) + L-glutamine + ATP + H2O = L-glutaminyl-tRNA(Gln) + L-glutamate + ADP + phosphate + H(+). Its function is as follows. Allows the formation of correctly charged Gln-tRNA(Gln) through the transamidation of misacylated Glu-tRNA(Gln). The reaction takes place in the presence of glutamine and ATP through an activated gamma-phospho-Glu-tRNA(Gln). The sequence is that of Glutamyl-tRNA(Gln) amidotransferase subunit B, organellar chromatophore from Paulinella chromatophora.